The chain runs to 1115 residues: Integrin alpha-PS3 (1115 aa).

An N-terminal signal peptide occupies residues Met-1 to Ala-24. The Extracellular portion of the chain corresponds to Phe-25 to Thr-1054. 7 FG-GAP repeats span residues Lys-39–Pro-99, Ser-113–Gln-174, Asp-193–Pro-246, Ile-278–Ile-335, His-336–Glu-397, Arg-398–Asp-453, and Asp-460–Arg-522. 3 N-linked (GlcNAc...) asparagine glycosylation sites follow: Asn-46, Asn-82, and Asn-166. A glycan (N-linked (GlcNAc...) asparagine) is linked at Asn-438. N-linked (GlcNAc...) asparagine glycans are attached at residues Asn-696, Asn-845, Asn-868, and Asn-964. The helical transmembrane segment at Gly-1055–Ile-1075 threads the bilayer. Residues Ser-1076–Asn-1115 lie on the Cytoplasmic side of the membrane.

Belongs to the integrin alpha chain family. In terms of assembly, heterodimer of an alpha and a beta subunit. The alpha subunit is composed of a heavy and a light chain linked by a disulfide bond. Interacts with mys/beta-PS and Itgbn. Expressed in embryonic and larval hemocytes (at protein level). Expressed in tissues undergoing invagination, tissue movement and morphogenesis such as salivary gland, trachea, midgut endoderm, dorsal vessel, midline of the ventral nerve cord, amnioserosa and the amnioproctodeal invagination. Expressed in the mushroom body neuropil, brain areas that contain mushroom body processes in synaptic contact with other neurons. In egg chambers, expressed in border cells, in stretch cells and in dorsal appendage primordia.

The protein resides in the apical cell membrane. It localises to the lateral cell membrane. It is found in the cytoplasm. Integrin alpha-PS3/beta-PS is a receptor for laminin. Also binds to wb. Important during embryogenesis for the development of the trachea, dorsal vessel and salivary gland, as well as for dorsal closure. Required for short-term memory processes. Minor involvement in the establishment of the oocyte anterior-posterior length. Plays a role in timely border cell migration during oogenesis, probably mediated by JNK signaling. Integrin alpha-PS3/Itgbn is required for effective phagocytosis of apoptotic cells during embryonic development and for the phagocytic elimination of S.aureus by mediating the binding of S.aureus peptidoglycan to larval hemocytes, which probably activates a signaling pathway involving Rac1 and Rac2. Integrin alpha-PS3/Itgbn also regulates Fak activity during neuromuscular junction (NMJ) growth and is required for its activation in presynapsis of NMJs. Seems to be dispensable for major morphogenetic processes. The sequence is that of Integrin alpha-PS3 (scb) from Drosophila melanogaster (Fruit fly).